A 192-amino-acid chain; its full sequence is Protein GrpE (192 aa).

Positions 1-20 are enriched in basic and acidic residues; it reads MEERNEQVVEEVKEEVKEAQ. A disordered region spans residues 1–39; that stretch reads MEERNEQVVEEVKEEVKEAQVEEAVTSEDSEESVEEKSE. A compositionally biased stretch (acidic residues) spans 25–34; it reads VTSEDSEESV.

The protein belongs to the GrpE family. In terms of assembly, homodimer.

Its subcellular location is the cytoplasm. Participates actively in the response to hyperosmotic and heat shock by preventing the aggregation of stress-denatured proteins, in association with DnaK and GrpE. It is the nucleotide exchange factor for DnaK and may function as a thermosensor. Unfolded proteins bind initially to DnaJ; upon interaction with the DnaJ-bound protein, DnaK hydrolyzes its bound ATP, resulting in the formation of a stable complex. GrpE releases ADP from DnaK; ATP binding to DnaK triggers the release of the substrate protein, thus completing the reaction cycle. Several rounds of ATP-dependent interactions between DnaJ, DnaK and GrpE are required for fully efficient folding. The protein is Protein GrpE of Bacillus cereus (strain ATCC 10987 / NRS 248).